The primary structure comprises 346 residues: Melatonin receptor type 1C (346 aa).

Topologically, residues 1–26 (MERPGSNGSCSGCRLEGGPAARAASG) are extracellular. An N-linked (GlcNAc...) asparagine glycan is attached at N7. The chain crosses the membrane as a helical span at residues 27–47 (LAAVLIVTIVVDVLGNALVIL). Residues 48 to 60 (SVLRNKKLRNAGN) lie on the Cytoplasmic side of the membrane. Residues 61-81 (IFVVSLSVADLVVAVYPYPLI) form a helical membrane-spanning segment. At 82–99 (LSAIFHNGWTMGNIHCQI) the chain is on the extracellular side. A disulfide bond links C97 and C174. The chain crosses the membrane as a helical span at residues 100 to 120 (SGFLMGLSVIGSIFNITAIAI). At 121–139 (NRYCYICHSLRYDKLFNLK) the chain is on the cytoplasmic side. A helical membrane pass occupies residues 140–160 (NTCCYICLTWTLTVVAIVPNF). Over 161–184 (FVGSLQYDPRIYSCTFAQTVSTSY) the chain is Extracellular. Residues 185 to 205 (TITVVVVHFIVPLSIVTFCYL) form a helical membrane-spanning segment. The Cytoplasmic portion of the chain corresponds to 206–237 (RIWILVIQVKHRVRQDCKQKIRAADIRNFLTM). Residues 238–258 (FVVFVLFAVCWGPLNFIGLAV) form a helical membrane-spanning segment. Residues 259-271 (SINPSKVQPHIPE) are Extracellular-facing. A helical transmembrane segment spans residues 272 to 292 (WLFVLSYFMAYFNSCLNAVIY). The Cytoplasmic portion of the chain corresponds to 293-346 (GLLNQNFRKEYKRILLMLRTPRLLFIDVSKGGTEGLKSKPSPAVTNNNQAEIHL). The tract at residues 326-346 (EGLKSKPSPAVTNNNQAEIHL) is disordered. The span at 335–346 (AVTNNNQAEIHL) shows a compositional bias: polar residues.

It belongs to the G-protein coupled receptor 1 family. As to expression, expressed in optic tectum, neostriatum, hypothalamus, thalamus and pineal gland, less in cerebellum and retina.

The protein resides in the cell membrane. High affinity receptor for melatonin. The activity of this receptor is mediated by pertussis toxin sensitive G proteins that inhibits adenylate cyclase activity. This is Melatonin receptor type 1C from Gallus gallus (Chicken).